The primary structure comprises 1615 residues: Regulating synaptic membrane exocytosis protein 1 (1615 aa).

A disordered region spans residues 1–26 (MSSAVGPRGPRPPTVPPPMQELPDLS). Positions 9–20 (GPRPPTVPPPMQ) are enriched in pro residues. A RabBD domain is found at 22 to 205 (LPDLSHLTEE…TKSGAWFFGS (184 aa)). The FYVE-type zinc-finger motif lies at 133-193 (KDDAPTCGIC…VCNLCRKQQE (61 aa)). Zn(2+) is bound by residues Cys139, Cys142, Cys155, Cys158, Cys163, Cys166, Cys185, and Cys188. Positions 205-569 (SGPQQPSQDG…CEDVELESES (365 aa)) are disordered. Residues 206-222 (GPQQPSQDGTLSDTATG) show a composition bias toward polar residues. Basic and acidic residues predominate over residues 227-240 (VPREKKARLQERSR). A compositionally biased stretch (polar residues) spans 241 to 256 (SQTPLSTAAVSSQDTA). Basic and acidic residues predominate over residues 327–379 (ADERERKERRETRRLEKGRSQDYSDRPEKRDNGRVAEDQKQRKEEEYQTRYRS). Residues 399-410 (MHARVSRARHER) show a composition bias toward basic residues. Low complexity predominate over residues 421 to 459 (EAAAAAPAEATAGKRAPATARVSPPESPRARAAAAQPPT). The segment covering 460-475 (EHGPPPPRPAPGPAEP) has biased composition (pro residues). Basic and acidic residues predominate over residues 476–489 (PEPRVPEPLRKQGR). A compositionally biased stretch (polar residues) spans 511–523 (RNDSLSSDQSESV). Residue Ser514 is modified to Phosphoserine. Positions 529–541 (KPHRPKRGGKRRQ) are enriched in basic residues. Over residues 559–569 (SCEDVELESES) the composition is skewed to acidic residues. Residue Ser592 is modified to Phosphoserine. The 87-residue stretch at 619-705 (RTTMPKESGA…EPQVEIIVSR (87 aa)) folds into the PDZ domain. The tract at residues 712 to 746 (RIPESSHPPLESSSSSFESQKMERPSISVISPTSP) is disordered. Over residues 714–730 (PESSHPPLESSSSSFES) the composition is skewed to low complexity. A phosphoserine mark is found at Ser742 and Ser745. Positions 756-879 (LPGQLSVKLW…ALLDDEPHWY (124 aa)) constitute a C2 1 domain. The disordered stretch occupies residues 884 to 1201 (HDESSLPLPQ…RQLPQVPVRS (318 aa)). At Ser895 the chain carries Phosphoserine. Positions 949–958 (ATTLTVPEQQ) are enriched in polar residues. Residue Ser991 is modified to Phosphoserine. Positions 1006 to 1023 (RHHDASRSPADHRSRHVE) are enriched in basic and acidic residues. At Ser1045 the chain carries Phosphoserine. The segment covering 1078–1092 (SPERERHSRKSERCS) has biased composition (basic and acidic residues). Positions 1173 to 1187 (QGSPTQSPPADTSFG) are enriched in polar residues. Ser1175 is subject to Phosphoserine. Thr1177 carries the phosphothreonine modification. Residues Ser1179, Ser1231, Ser1233, Ser1234, Ser1262, Ser1263, and Ser1265 each carry the phosphoserine modification. The disordered stretch occupies residues 1256–1313 (DNASAKSSDSDVSDVSAISRASSTSRLSSTSFMSEQSERPRGRISSFTPKMQGRRMGT). A compositionally biased stretch (low complexity) spans 1268-1289 (SDVSAISRASSTSRLSSTSFMS). Ser1339 bears the Phosphoserine mark. Positions 1368-1397 (RSRSTSQLSQTESGHKKLKSTIQRSTETGM) are disordered. The C2 2 domain occupies 1461–1579 (AMGDIQIGME…DLSSMVIGWY (119 aa)). A phosphoserine mark is found at Ser1600, Ser1603, Ser1606, and Ser1615.

As to quaternary structure, interacts with RAB3C, RAB10, RAB26 and RAB37. Binds SNAP25, SYT1 and CACNA1B. Interaction with SYT1 is enhanced by calcium ions. Interaction with SNAP25 is weaker in the presence of calcium ions. Binds RAB3A, RAB3B and RAB3D that have been activated by GTP-binding. Binds UNC13A. Interacts with TSPOAP1 and RIMBP2. Interacts with PPFIA3 and PPFIA4. Interacts with ERC1. In terms of processing, phosphorylated by BRSK1. In terms of tissue distribution, highly expressed in hippocampus, brain cortex, cerebellum and olfactory bulb. Detected at lower levels in midbrain, hindbrain and spinal cord. Detected retina and in spinal cord motor neurons.

The protein resides in the cell membrane. The protein localises to the synapse. Its subcellular location is the presynaptic cell membrane. Its function is as follows. Rab effector involved in exocytosis. May act as scaffold protein that regulates neurotransmitter release at the active zone. Essential for maintaining normal probability of neurotransmitter release and for regulating release during short-term synaptic plasticity. Plays a role in dendrite formation by melanocytes. The protein is Regulating synaptic membrane exocytosis protein 1 (Rims1) of Rattus norvegicus (Rat).